Consider the following 515-residue polypeptide: Recombining binding protein suppressor of hairless-like protein (515 aa).

Residues 1–40 form a disordered region; sequence MDPRETTDPSLPPGPLTHLSLPDSSEVRLQSDGPSLLGSW. DNA-binding stretches follow at residues 76-86, 191-196, and 218-223; these read QKSYGNEKRFF, SKPSQK, and RLRSQT. An IPT/TIG domain is found at 384–474; it reads PLISTLELSG…YPSPFSFTYT (91 aa).

Belongs to the Su(H) family. Interacts weakly with EBNA2. Does not interact with any Notch proteins. As to expression, highly expressed in lung. Also detected in spleen, and brain.

It localises to the nucleus. In terms of biological role, putative transcription factor, which cooperates with EBNA2 to activate transcription. This is Recombining binding protein suppressor of hairless-like protein (Rbpjl) from Mus musculus (Mouse).